Consider the following 369-residue polypeptide: Terpene cyclase DEP1 (369 aa).

8 consecutive transmembrane segments (helical) span residues 9–29, 82–102, 118–138, 157–177, 190–210, 234–254, 298–318, and 342–362; these read FFYLSALGIWGLWVYAFFNGM, LLFFDVNYVVACANLWVLIES, AMVLCNANGAAIVLPLYLYLV, ALLVSTVVILLQPLLIFVPAW, IALFQVAPIGVSVFHLGLASI, LVLAGTVAAAVHSYTVVGALI, LFSQWDWIVVALTSVLYSHLL, and LVYLTVATIILGPGGAASFAL.

This sequence belongs to the membrane-bound ascI terpene cyclase family.

Its subcellular location is the membrane. It participates in polyketide biosynthesis. Its function is as follows. Part of the gene cluster that mediates the biosynthesis of depudecin, a highly oxidized eleven-carbon linear polyketide that acts as a histone deacetylase (HDAC) inhibitor and makes a small contribution to pathogenesis. The reducing polyketide synthase DEP5 is the central enzyme in depudecin biosynthesis by yielding the backbone polyketide chain. The monooxygenases DEP2 and DEP4, as well as the uncharacterized protein DEP1, then act as tailoring enzymes to modify the intermediate polyketide chain into depudecin. This Alternaria brassicicola (Dark leaf spot agent) protein is Terpene cyclase DEP1.